A 188-amino-acid polypeptide reads, in one-letter code: ATP synthase subunit delta (188 aa).

Belongs to the ATPase delta chain family. In terms of assembly, F-type ATPases have 2 components, F(1) - the catalytic core - and F(0) - the membrane proton channel. F(1) has five subunits: alpha(3), beta(3), gamma(1), delta(1), epsilon(1). F(0) has three main subunits: a(1), b(2) and c(10-14). The alpha and beta chains form an alternating ring which encloses part of the gamma chain. F(1) is attached to F(0) by a central stalk formed by the gamma and epsilon chains, while a peripheral stalk is formed by the delta and b chains.

It is found in the cell inner membrane. Its function is as follows. F(1)F(0) ATP synthase produces ATP from ADP in the presence of a proton or sodium gradient. F-type ATPases consist of two structural domains, F(1) containing the extramembraneous catalytic core and F(0) containing the membrane proton channel, linked together by a central stalk and a peripheral stalk. During catalysis, ATP synthesis in the catalytic domain of F(1) is coupled via a rotary mechanism of the central stalk subunits to proton translocation. This protein is part of the stalk that links CF(0) to CF(1). It either transmits conformational changes from CF(0) to CF(1) or is implicated in proton conduction. This is ATP synthase subunit delta from Sinorhizobium medicae (strain WSM419) (Ensifer medicae).